A 356-amino-acid chain; its full sequence is NAC domain-containing protein JA2L (356 aa).

One can recognise an NAC domain in the interval 14-162 (LPPGFRFYPT…DWVLCRIYKK (149 aa)). The DNA-binding element occupies 111–168 (VGIKKALVFYIGKAPKGTKTNWIMHEYRLSEPTTKTGSSRLDDWVLCRIYKKNSGGQK). Positions 163 to 191 (NSGGQKSSCSDLQNKDISHASSSSSSSQF) are disordered. A compositionally biased stretch (polar residues) spans 164–174 (SGGQKSSCSDL).

In terms of tissue distribution, expressed in guard cells of the epidermis.

It is found in the nucleus. Transcription factor that acts downstream of MYC2 in the jasmonate-mediated response to Botrytis cinerea infection. With MYC2 forms a transcription module that regulates wounding-responsive genes. Involved in jasmonate- and coronatine-mediated stomatal reopening in response to Pseudomonas syringae pv tomato DC3000 infection. Regulates the expression of threonine deaminase 2 (TD2) through promoter binding. The protein is NAC domain-containing protein JA2L of Solanum lycopersicum (Tomato).